The primary structure comprises 366 residues: GTP cyclohydrolase 1 type 2 homolog (366 aa).

A divalent metal cation contacts are provided by histidine 64, histidine 65, aspartate 102, histidine 326, and glutamate 329.

It belongs to the GTP cyclohydrolase I type 2/NIF3 family. In terms of assembly, homohexamer.

The chain is GTP cyclohydrolase 1 type 2 homolog from Staphylococcus epidermidis (strain ATCC 12228 / FDA PCI 1200).